Consider the following 315-residue polypeptide: Biotin synthase (315 aa).

A Radical SAM core domain is found at Asn-39–Arg-266. [4Fe-4S] cluster-binding residues include Cys-54, Cys-58, and Cys-61. [2Fe-2S] cluster is bound by residues Cys-98, Cys-129, Cys-189, and Arg-261.

The protein belongs to the radical SAM superfamily. Biotin synthase family. Homodimer. [4Fe-4S] cluster is required as a cofactor. It depends on [2Fe-2S] cluster as a cofactor.

The enzyme catalyses (4R,5S)-dethiobiotin + (sulfur carrier)-SH + 2 reduced [2Fe-2S]-[ferredoxin] + 2 S-adenosyl-L-methionine = (sulfur carrier)-H + biotin + 2 5'-deoxyadenosine + 2 L-methionine + 2 oxidized [2Fe-2S]-[ferredoxin]. The protein operates within cofactor biosynthesis; biotin biosynthesis; biotin from 7,8-diaminononanoate: step 2/2. In terms of biological role, catalyzes the conversion of dethiobiotin (DTB) to biotin by the insertion of a sulfur atom into dethiobiotin via a radical-based mechanism. This is Biotin synthase from Legionella pneumophila (strain Lens).